Consider the following 286-residue polypeptide: Phosphatidylserine decarboxylase proenzyme (286 aa).

Catalysis depends on charge relay system; for autoendoproteolytic cleavage activity residues Asp90, His147, and Ser250. Ser250 serves as the catalytic Schiff-base intermediate with substrate; via pyruvic acid; for decarboxylase activity. Ser250 is modified (pyruvic acid (Ser); by autocatalysis).

Belongs to the phosphatidylserine decarboxylase family. PSD-B subfamily. Prokaryotic type I sub-subfamily. As to quaternary structure, heterodimer of a large membrane-associated beta subunit and a small pyruvoyl-containing alpha subunit. The cofactor is pyruvate. Post-translationally, is synthesized initially as an inactive proenzyme. Formation of the active enzyme involves a self-maturation process in which the active site pyruvoyl group is generated from an internal serine residue via an autocatalytic post-translational modification. Two non-identical subunits are generated from the proenzyme in this reaction, and the pyruvate is formed at the N-terminus of the alpha chain, which is derived from the carboxyl end of the proenzyme. The autoendoproteolytic cleavage occurs by a canonical serine protease mechanism, in which the side chain hydroxyl group of the serine supplies its oxygen atom to form the C-terminus of the beta chain, while the remainder of the serine residue undergoes an oxidative deamination to produce ammonia and the pyruvoyl prosthetic group on the alpha chain. During this reaction, the Ser that is part of the protease active site of the proenzyme becomes the pyruvoyl prosthetic group, which constitutes an essential element of the active site of the mature decarboxylase.

The protein localises to the cell membrane. It catalyses the reaction a 1,2-diacyl-sn-glycero-3-phospho-L-serine + H(+) = a 1,2-diacyl-sn-glycero-3-phosphoethanolamine + CO2. It participates in phospholipid metabolism; phosphatidylethanolamine biosynthesis; phosphatidylethanolamine from CDP-diacylglycerol: step 2/2. Catalyzes the formation of phosphatidylethanolamine (PtdEtn) from phosphatidylserine (PtdSer). This is Phosphatidylserine decarboxylase proenzyme from Psychromonas ingrahamii (strain DSM 17664 / CCUG 51855 / 37).